We begin with the raw amino-acid sequence, 332 residues long: Ferrochelatase (332 aa).

Fe cation-binding residues include histidine 201 and glutamate 283.

This sequence belongs to the ferrochelatase family.

The protein localises to the cytoplasm. The enzyme catalyses heme b + 2 H(+) = protoporphyrin IX + Fe(2+). Its pathway is porphyrin-containing compound metabolism; protoheme biosynthesis; protoheme from protoporphyrin-IX: step 1/1. Its function is as follows. Catalyzes the ferrous insertion into protoporphyrin IX. This chain is Ferrochelatase, found in Francisella tularensis subsp. holarctica (strain FTNF002-00 / FTA).